A 357-amino-acid polypeptide reads, in one-letter code: MTSELDIFVGNTTLIDEDVYRLWLDGYSVTDAVALRVRSGILEQTGATAAVLQSDTMDHYRTFHMLERLLHAPPKLLHQLIFQIPPSRQALLIERYYAFDEAFVREVLGKKLSKGTKKDLDDISTKTGITLKSCRRQFDNFKRVFKVVEEMRGSLVDNIQQHFLLSDRLARDYAAIVFFANNRFETGKKKLQYLSFGDFAFCAELMIQNWTLGAVDSQMDDMDMDLDKEFLQDLKELKVLVADKDLLDLHKSLVCTALRGKLGVFSEMEANFKNLSRGLVNVAAKLTHNKDVRDLFVDLVEKFVEPCRSDHWPLSDVRFFLNQYSASVHSLDGFRHQALWDRYMGTLRGCLLRLYHD.

T2 carries the N-acetylthreonine modification.

Binds to internalized FGF1; this interaction is increased in the presence of CSNKB, suggesting a possible cooperative interaction between CSNKB and FIBP in binding to FGF1.

It localises to the nucleus. It is found in the endomembrane system. In terms of biological role, may be involved in mitogenic function of FGF1. May mediate with IER2 FGF-signaling in the establishment of laterality in the embryo. This is Acidic fibroblast growth factor intracellular-binding protein (FIBP) from Chlorocebus aethiops (Green monkey).